The chain runs to 362 residues: 4-hydroxythreonine-4-phosphate dehydrogenase (362 aa).

Threonine 149 contributes to the substrate binding site. Residues histidine 184, histidine 229, and histidine 295 each coordinate a divalent metal cation. Substrate is bound by residues lysine 303, asparagine 312, and arginine 321.

It belongs to the PdxA family. Homodimer. A divalent metal cation serves as cofactor.

It is found in the cytoplasm. The catalysed reaction is 4-(phosphooxy)-L-threonine + NAD(+) = 3-amino-2-oxopropyl phosphate + CO2 + NADH. The protein operates within cofactor biosynthesis; pyridoxine 5'-phosphate biosynthesis; pyridoxine 5'-phosphate from D-erythrose 4-phosphate: step 4/5. Catalyzes the NAD(P)-dependent oxidation of 4-(phosphooxy)-L-threonine (HTP) into 2-amino-3-oxo-4-(phosphooxy)butyric acid which spontaneously decarboxylates to form 3-amino-2-oxopropyl phosphate (AHAP). This chain is 4-hydroxythreonine-4-phosphate dehydrogenase, found in Nostoc sp. (strain PCC 7120 / SAG 25.82 / UTEX 2576).